Here is a 215-residue protein sequence, read N- to C-terminus: Formate dehydrogenase subunit beta (215 aa).

A 4Fe-4S ferredoxin-type 1 domain is found at 3 to 32 (KGFFVDTTRCTACRGCQVACKQWHGNPATP). Residues C12, C15, C18, C22, C73, C76, C81, C121, C138, C141, C153, and C157 each contribute to the [4Fe-4S] cluster site. In terms of domain architecture, 4Fe-4S ferredoxin-type 2 spans 129-168 (VAESNQMAKCDMCIDRITNGLRPACVTSCPTGAMNFGDLS).

As to quaternary structure, heterodimer of alpha (FdhA) and beta (FdhB) subunits. [4Fe-4S] cluster serves as cofactor.

The protein resides in the periplasm. In terms of biological role, beta chain of the formate dehydrogenase (FDH) catalyzes the reversible two-electron oxidation of formate to carbon dioxide. FDH loses activity in the presence of air, but this activity can be restored. This chain is an electron transfer unit. The chain is Formate dehydrogenase subunit beta from Megalodesulfovibrio gigas (strain ATCC 19364 / DSM 1382 / NCIMB 9332 / VKM B-1759) (Desulfovibrio gigas).